Here is a 572-residue protein sequence, read N- to C-terminus: Chromatin assembly factor 1 subunit B (572 aa).

WD repeat units follow at residues 11-54 (HNKE…DGKA), 64-103 (RHTKAVNVVRFSPTGEILASGGDDAVILLWKMNDSKEPEQ), 127-166 (GHLEDVYDICWATDGNLMTSASVDNTVIIWDVSKGQKISI), 169-208 (EHKSYVQGVTWDPLGQYIATLSCDRVLRIYNTQKKRVAFN), 228-279 (FHDD…RPIA), 301-347 (RPVA…PFGY), and 351-392 (IHYH…IPLK). Residue threonine 401 is modified to Phosphothreonine. Residues 403–572 (DTAKKAKNQT…LAPDDSSKTV (170 aa)) form a disordered region. Over residues 411–430 (QTHQGSSPGSRSVEGTPSNR) the composition is skewed to polar residues. Serine 416 is modified (phosphoserine). Threonine 426 carries the post-translational modification Phosphothreonine. Residues 431 to 452 (TQDPSSPCTTPSPTTQSPAPSA) show a composition bias toward low complexity. Phosphoserine is present on serine 436. Residue threonine 440 is modified to Phosphothreonine. 2 positions are modified to phosphoserine: serine 456 and serine 465. An N6-acetyllysine modification is found at lysine 501. Residues threonine 502 and threonine 510 each carry the phosphothreonine modification. Residues 511–529 (PLKTDTVPNPQPNSGTAPS) show a composition bias toward polar residues. Residues 546–559 (PELKRPRLEEREGD) are compositionally biased toward basic and acidic residues.

This sequence belongs to the WD repeat HIR1 family. In terms of assembly, subunit of the CAF-1 complex that contains RBBP4, CHAF1B and CHAF1A. CHAF1A binds directly to CHAF1B. Interacts with histones H3.1, H3.2 and H3.1t.

The protein localises to the nucleus. The protein resides in the cytoplasm. Its function is as follows. Acts as a component of the histone chaperone complex chromatin assembly factor 1 (CAF-1), which assembles histone octamers onto DNA during replication and repair. CAF-1 performs the first step of the nucleosome assembly process, bringing newly synthesized histones H3 and H4 to replicating DNA; histones H2A/H2B can bind to this chromatin precursor subsequent to DNA replication to complete the histone octamer. This is Chromatin assembly factor 1 subunit B from Mus musculus (Mouse).